We begin with the raw amino-acid sequence, 545 residues long: Labda-7,13-dienyl diphosphate synthase (545 aa).

A DXDDTA motif motif is present at residues 315–320 (DADDTA). Positions 444-450 (RRTDGSW) match the RXXDGSW motif motif. The disordered stretch occupies residues 526–545 (LPAPAPVPPGFDAARTGPAD).

It belongs to the terpene synthase family. Mg(2+) serves as cofactor.

It catalyses the reaction (2E,6E,10E)-geranylgeranyl diphosphate = (13E)-labda-7,13-dien-15-yl diphosphate. Functionally, involved in the biosynthesis of the labdane-type bicyclic diterpene labda-7,13(16),14-triene. Catalyzes the conversion of geranylgeranyl diphosphate (GGDP) into labda-7,13(E)-dienyl diphosphate. In Streptomyces clavuligerus, this protein is Labda-7,13-dienyl diphosphate synthase.